The sequence spans 180 residues: Trafficking protein particle complex subunit 3 (180 aa).

Cys-68 is lipidated: S-palmitoyl cysteine.

The protein belongs to the TRAPP small subunits family. BET3 subfamily. As to quaternary structure, homodimer. Part of the multisubunit TRAPP (transport protein particle) complex.

The protein localises to the golgi apparatus. It is found in the cis-Golgi network. It localises to the endoplasmic reticulum. In terms of biological role, may play a role in vesicular transport from endoplasmic reticulum to Golgi. This chain is Trafficking protein particle complex subunit 3 (TRAPPC3), found in Gallus gallus (Chicken).